Here is a 203-residue protein sequence, read N- to C-terminus: Small ribosomal subunit protein uS7 (203 aa).

The segment at 1-22 is disordered; sequence MSESEAPEPDQPAGAEEATGAK.

It belongs to the universal ribosomal protein uS7 family. As to quaternary structure, part of the 30S ribosomal subunit.

One of the primary rRNA binding proteins, it binds directly to 16S rRNA where it nucleates assembly of the head domain of the 30S subunit. Is located at the subunit interface close to the decoding center. The protein is Small ribosomal subunit protein uS7 of Halococcus morrhuae (Micrococcus morrhuae).